Here is a 583-residue protein sequence, read N- to C-terminus: Isocitrate dehydrogenase kinase/phosphatase (583 aa).

Residues 315-321 and Lys336 each bind ATP; that span reads APGIRGM. Asp371 is an active-site residue.

It belongs to the AceK family.

It localises to the cytoplasm. The catalysed reaction is L-seryl-[isocitrate dehydrogenase] + ATP = O-phospho-L-seryl-[isocitrate dehydrogenase] + ADP + H(+). Its function is as follows. Bifunctional enzyme which can phosphorylate or dephosphorylate isocitrate dehydrogenase (IDH) on a specific serine residue. This is a regulatory mechanism which enables bacteria to bypass the Krebs cycle via the glyoxylate shunt in response to the source of carbon. When bacteria are grown on glucose, IDH is fully active and unphosphorylated, but when grown on acetate or ethanol, the activity of IDH declines drastically concomitant with its phosphorylation. In Salmonella paratyphi B (strain ATCC BAA-1250 / SPB7), this protein is Isocitrate dehydrogenase kinase/phosphatase.